The chain runs to 159 residues: Protein-export protein SecB (159 aa).

This sequence belongs to the SecB family. In terms of assembly, homotetramer, a dimer of dimers. One homotetramer interacts with 1 SecA dimer.

It localises to the cytoplasm. In terms of biological role, one of the proteins required for the normal export of preproteins out of the cell cytoplasm. It is a molecular chaperone that binds to a subset of precursor proteins, maintaining them in a translocation-competent state. It also specifically binds to its receptor SecA. The polypeptide is Protein-export protein SecB (Rhizobium etli (strain CIAT 652)).